A 2671-amino-acid chain; its full sequence is Stalled ribosome sensor GCN1 (2671 aa).

Alanine 2 carries the N-acetylalanine modification. 10 HEAT repeats span residues 140–178, 257–293, 294–331, 385–423, 425–459, 460–503, 560–597, 599–636, 697–732, and 733–770; these read NKLV…ENPG, EFKD…LDLS, QYAM…QCSD, IVAE…EVPK, LTEW…GDTL, LQAL…SVAD, NKVQ…SLGG, KLAH…AGKA, DPEA…SLSV, and LSPD…QTPA. A Phosphoserine modification is found at serine 729. Serine 786 carries the phosphoserine modification. Positions 804 to 863 form a coiled coil; that stretch reads QIIELELKEEIKKKKGIKEEVQLTSKQKEMLQAQLDREAQVRRRLQELDGELEAALGLLD. HEAT repeat units lie at residues 879–925, 979–1016, 1035–1072, 1078–1115, 1155–1192, 1210–1250, 1251–1289, 1290–1332, 1335–1372, 1374–1410, 1413–1451, 1455–1492, 1493–1530, 1534–1571, 1573–1609, 1611–1648, 1653–1690, 1692–1729, 1731–1769, 1773–1810, 1812–1848, 1921–1958, 1959–1996, 2001–2038, 2039–2076, 2078–2106, 2107–2146, 2147–2184, 2188–2225, 2259–2296, 2301–2338, 2339–2380, 2382–2417, 2422–2459, 2546–2583, and 2588–2625; these read VLVD…HVTL, SLVF…QAQL, LPRV…SSSG, FAEQ…VLPA, DLQP…RYQR, YRPP…YLDS, SQVK…THGK, ENVN…HLDK, PKVK…AIKE, AGGM…GLGI, LKQQ…MLGK, PYVV…NLSA, HGVK…CAPK, SCLP…VIRN, EILA…HFID, PSLA…LTDQ, PYLP…GMGE, CFED…GLGV, KLEK…TFGD, PYVG…MYAE, AIAL…HISG, EILP…KLGE, KILP…STSR, YFSE…TIGH, QALE…SRVV, PYLV…DALT, RHLG…VEDD, TGHR…RSKA, SHLR…KLDA, KGVT…LTSA, PSVV…AKVG, IALK…IHIK, DPLF…GAGA, VIRK…FLTE, QLPA…DPLP, and QAIK…MRQG. The interval 2260 to 2408 is RWDBD region; it reads GVTSILPVLR…GVRDTMLQAL (149 aa). Serine 2276 is modified (phosphoserine). The stretch at 2627–2661 is one HEAT 47; degenerate repeat; that stretch reads EVFQSLSKILDVASLEVLNEVNRRSLKKLASQADS.

Belongs to the GCN1 family. Interacts with EIF2AK4/GCN2; this interaction stimulates the EIF2AK4/GCN2 kinase activity and is impaired by IMPACT upon a variety of stress conditions, such as amino acid depletion, UV-C irradiation, proteasome inhibitor treatment and glucose deprivation. Interacts with IMPACT; this prevents the interaction of GCN1 with EIF2AK4/GCN2 and inhibits EIF2AK4/GCN2 kinase activity. Interacts with RNF14; interaction takes place following ribosome stalling and promotes recruitment of RNF14. In terms of tissue distribution, ubiquitously expressed. Expressed in skeletal muscules, ovary and testis.

It is found in the cytoplasm. In terms of biological role, ribosome collision sensor that plays a key role in the RNF14-RNF25 translation quality control pathway, a pathway that takes place when a ribosome has stalled during translation, and which promotes ubiquitination and degradation of translation factors on stalled ribosomes. Directly binds to the ribosome and acts as a sentinel for colliding ribosomes: activated following ribosome stalling and promotes recruitment of RNF14, which directly ubiquitinates EEF1A1/eEF1A, leading to its degradation. In addition to EEF1A1/eEF1A, the RNF14-RNF25 translation quality control pathway mediates degradation of ETF1/eRF1 and ubiquitination of ribosomal protein. GCN1 also acts as a positive activator of the integrated stress response (ISR) by mediating activation of EIF2AK4/GCN2 in response to amino acid starvation. Interaction with EIF2AK4/GCN2 on translating ribosomes stimulates EIF2AK4/GCN2 kinase activity, leading to phosphorylation of eukaryotic translation initiation factor 2 (eIF-2-alpha/EIF2S1). EIF2S1/eIF-2-alpha phosphorylation converts EIF2S1/eIF-2-alpha into a global protein synthesis inhibitor, leading to a global attenuation of cap-dependent translation, and thus to a reduced overall utilization of amino acids, while concomitantly initiating the preferential translation of ISR-specific mRNAs, such as the transcriptional activator ATF4, and hence allowing ATF4-mediated reprogramming of amino acid biosynthetic gene expression to alleviate nutrient depletion. This Homo sapiens (Human) protein is Stalled ribosome sensor GCN1.